Here is a 435-residue protein sequence, read N- to C-terminus: GTPase Der (435 aa).

EngA-type G domains follow at residues 4–167 (PVVA…GDKA) and 175–350 (IRFS…ENQT). Residues 10–17 (GRPNVGKS), 57–61 (DTGGI), 119–122 (NKAD), 181–188 (GRPNVGKS), 228–232 (DTAGI), and 293–296 (NKWD) contribute to the GTP site. The KH-like domain maps to 351-435 (RRIQSSVLND…PIKILARKRK (85 aa)).

The protein belongs to the TRAFAC class TrmE-Era-EngA-EngB-Septin-like GTPase superfamily. EngA (Der) GTPase family. In terms of assembly, associates with the 50S ribosomal subunit.

In terms of biological role, GTPase that plays an essential role in the late steps of ribosome biogenesis. This is GTPase Der from Lactobacillus johnsonii (strain CNCM I-12250 / La1 / NCC 533).